Consider the following 356-residue polypeptide: Tyrosine recombinase XerS (356 aa).

The Core-binding (CB) domain maps to 16–121 (LMPWFVLEYY…ALSCLYKYLT (106 aa)). The Tyr recombinase domain maps to 169-354 (KFLDYVENEY…VNDEQKNALD (186 aa)). Residues arginine 210, lysine 234, histidine 306, arginine 309, and histidine 332 contribute to the active site. Tyrosine 341 serves as the catalytic O-(3'-phospho-DNA)-tyrosine intermediate.

Belongs to the 'phage' integrase family. XerS subfamily.

The protein resides in the cytoplasm. Its activity is regulated as follows. FtsK is required for recombination. In terms of biological role, site-specific tyrosine recombinase, which acts by catalyzing the cutting and rejoining of the recombining DNA molecules. Essential to convert dimers of the bacterial chromosome into monomers to permit their segregation at cell division. The chain is Tyrosine recombinase XerS from Streptococcus thermophilus (strain ATCC BAA-250 / LMG 18311).